A 230-amino-acid chain; its full sequence is Demethylmenaquinone methyltransferase (230 aa).

S-adenosyl-L-methionine is bound by residues Thr57, Asp77, 101 to 102 (DI), and Ser118.

Belongs to the class I-like SAM-binding methyltransferase superfamily. MenG/UbiE family.

The catalysed reaction is a 2-demethylmenaquinol + S-adenosyl-L-methionine = a menaquinol + S-adenosyl-L-homocysteine + H(+). The protein operates within quinol/quinone metabolism; menaquinone biosynthesis; menaquinol from 1,4-dihydroxy-2-naphthoate: step 2/2. Functionally, methyltransferase required for the conversion of demethylmenaquinol (DMKH2) to menaquinol (MKH2). The protein is Demethylmenaquinone methyltransferase of Chlamydia caviae (strain ATCC VR-813 / DSM 19441 / 03DC25 / GPIC) (Chlamydophila caviae).